Reading from the N-terminus, the 338-residue chain is MNLQKFPRHALTFGPTPIHPLKRLSAHLGGKVELYAKREDCNSGLAFGGNKTRKLEYLIPEAIEGGYDTLVSIGGIQSNQTRQVAAVAAHLGMKCVLVQENWVNYSDAVYDRVGNIEMSRIMGADVRLDAAGFDIGIRPSWEQAMEDVRRAGGKPFPIPAGCSEHPRGGLGFVAFAEEVRQQEEELGFQFDYIVVCSVTGSTQAGMVVGFAADGRADRVIGIDASAKPEQTREQILRIARNTAELVELGREITDADVVLDTRYGGPEYGLPNEGTLEAIRLCARQEGMLTDPVYEGKSMHGMIDMVRNGEFPAGSRVLYAHLGGVPALNAYSFLFRNG.

An N6-(pyridoxal phosphate)lysine modification is found at lysine 51. Serine 78 acts as the Nucleophile in catalysis.

The protein belongs to the ACC deaminase/D-cysteine desulfhydrase family. As to quaternary structure, homotrimer. Pyridoxal 5'-phosphate is required as a cofactor.

It catalyses the reaction 1-aminocyclopropane-1-carboxylate + H2O = 2-oxobutanoate + NH4(+). Its function is as follows. Catalyzes a cyclopropane ring-opening reaction, the irreversible conversion of 1-aminocyclopropane-1-carboxylate (ACC) to ammonia and alpha-ketobutyrate. Allows growth on ACC as a nitrogen source. The sequence is that of 1-aminocyclopropane-1-carboxylate deaminase from Paracidovorax citrulli (strain AAC00-1) (Acidovorax citrulli).